The sequence spans 379 residues: Neutral protease 2 homolog TRV_03208 (379 aa).

An N-terminal signal peptide occupies residues Met1–Ala19. A propeptide spanning residues Leu20–Arg187 is cleaved from the precursor. 2 disulfide bridges follow: Cys193–Cys263 and Cys270–Cys288. N-linked (GlcNAc...) asparagine glycosylation occurs at Asn221. A Zn(2+)-binding site is contributed by His312. The active site involves Glu313. 2 residues coordinate Zn(2+): His316 and Asp327.

The protein belongs to the peptidase M35 family. The cofactor is Zn(2+).

Its subcellular location is the secreted. The catalysed reaction is Preferential cleavage of bonds with hydrophobic residues in P1'. Also 3-Asn-|-Gln-4 and 8-Gly-|-Ser-9 bonds in insulin B chain.. In terms of biological role, secreted metalloproteinase that allows assimilation of proteinaceous substrates. Shows high activities on basic nuclear substrates such as histone and protamine. May be involved in virulence. The protein is Neutral protease 2 homolog TRV_03208 of Trichophyton verrucosum (strain HKI 0517).